A 328-amino-acid polypeptide reads, in one-letter code: Serine protease 27 (328 aa).

Residues 1–22 (MRQPHITALLLLPLLLRSGTEG) form the signal peptide. The propeptide at 23 to 37 (AEAMRACGHPRMFNR) is activation peptide. The Peptidase S1 domain occupies 38–280 (MVGGEDALEG…HYQWIHQIIP (243 aa)). Residues Cys63 and Cys79 are joined by a disulfide bond. His78 acts as the Charge relay system in catalysis. Asn82 carries N-linked (GlcNAc...) asparagine glycosylation. Residue Asp127 is the Charge relay system of the active site. 3 cysteine pairs are disulfide-bonded: Cys161–Cys238, Cys194–Cys217, and Cys228–Cys256. Catalysis depends on Ser232, which acts as the Charge relay system.

This sequence belongs to the peptidase S1 family.

It localises to the secreted. In Rattus norvegicus (Rat), this protein is Serine protease 27 (Prss27).